The chain runs to 492 residues: N-succinylglutamate 5-semialdehyde dehydrogenase (492 aa).

220–225 (GSANTG) is an NAD(+) binding site. Catalysis depends on residues glutamate 243 and cysteine 277.

The protein belongs to the aldehyde dehydrogenase family. AstD subfamily.

The catalysed reaction is N-succinyl-L-glutamate 5-semialdehyde + NAD(+) + H2O = N-succinyl-L-glutamate + NADH + 2 H(+). Its pathway is amino-acid degradation; L-arginine degradation via AST pathway; L-glutamate and succinate from L-arginine: step 4/5. Its function is as follows. Catalyzes the NAD-dependent reduction of succinylglutamate semialdehyde into succinylglutamate. The protein is N-succinylglutamate 5-semialdehyde dehydrogenase of Escherichia coli O9:H4 (strain HS).